We begin with the raw amino-acid sequence, 569 residues long: Sulfite reductase [NADPH] hemoprotein beta-component (569 aa).

[4Fe-4S] cluster contacts are provided by cysteine 433, cysteine 439, cysteine 478, and cysteine 482. Cysteine 482 contacts siroheme.

The protein belongs to the nitrite and sulfite reductase 4Fe-4S domain family. As to quaternary structure, alpha(8)-beta(8). The alpha component is a flavoprotein, the beta component is a hemoprotein. Siroheme serves as cofactor. It depends on [4Fe-4S] cluster as a cofactor.

It catalyses the reaction hydrogen sulfide + 3 NADP(+) + 3 H2O = sulfite + 3 NADPH + 4 H(+). It functions in the pathway sulfur metabolism; hydrogen sulfide biosynthesis; hydrogen sulfide from sulfite (NADPH route): step 1/1. Its function is as follows. Component of the sulfite reductase complex that catalyzes the 6-electron reduction of sulfite to sulfide. This is one of several activities required for the biosynthesis of L-cysteine from sulfate. This Pseudoalteromonas atlantica (strain T6c / ATCC BAA-1087) protein is Sulfite reductase [NADPH] hemoprotein beta-component.